Here is a 494-residue protein sequence, read N- to C-terminus: Guanosine-5'-triphosphate,3'-diphosphate pyrophosphatase (494 aa).

It belongs to the GppA/Ppx family. GppA subfamily.

The enzyme catalyses guanosine 3'-diphosphate 5'-triphosphate + H2O = guanosine 3',5'-bis(diphosphate) + phosphate + H(+). It functions in the pathway purine metabolism; ppGpp biosynthesis; ppGpp from GTP: step 2/2. Functionally, catalyzes the conversion of pppGpp to ppGpp. Guanosine pentaphosphate (pppGpp) is a cytoplasmic signaling molecule which together with ppGpp controls the 'stringent response', an adaptive process that allows bacteria to respond to amino acid starvation, resulting in the coordinated regulation of numerous cellular activities. The sequence is that of Guanosine-5'-triphosphate,3'-diphosphate pyrophosphatase from Cronobacter sakazakii (strain ATCC BAA-894) (Enterobacter sakazakii).